Consider the following 181-residue polypeptide: CDP-diacylglycerol--glycerol-3-phosphate 3-phosphatidyltransferase (181 aa).

4 helical membrane passes run 8 to 28, 35 to 55, 64 to 84, and 148 to 168; these read PNYLTIARIMVIPVIILAFYI, KLGALLFVLASITDFFDGYIA, FGKMFDPIADKLLIGCVIIML, and IIYLDIVGEIILWIAAFLTII.

Belongs to the CDP-alcohol phosphatidyltransferase class-I family.

The protein resides in the cell membrane. It catalyses the reaction a CDP-1,2-diacyl-sn-glycerol + sn-glycerol 3-phosphate = a 1,2-diacyl-sn-glycero-3-phospho-(1'-sn-glycero-3'-phosphate) + CMP + H(+). The protein operates within phospholipid metabolism; phosphatidylglycerol biosynthesis; phosphatidylglycerol from CDP-diacylglycerol: step 1/2. In terms of biological role, this protein catalyzes the committed step to the synthesis of the acidic phospholipids. The polypeptide is CDP-diacylglycerol--glycerol-3-phosphate 3-phosphatidyltransferase (pgsA) (Rickettsia felis (strain ATCC VR-1525 / URRWXCal2) (Rickettsia azadi)).